The primary structure comprises 196 residues: Imidazole glycerol phosphate synthase subunit HisH (196 aa).

Positions 2 to 196 (DVVILDTGCA…AQLMKNFLEM (195 aa)) constitute a Glutamine amidotransferase type-1 domain. C77 (nucleophile) is an active-site residue. Residues H178 and E180 contribute to the active site.

As to quaternary structure, heterodimer of HisH and HisF.

It is found in the cytoplasm. It carries out the reaction 5-[(5-phospho-1-deoxy-D-ribulos-1-ylimino)methylamino]-1-(5-phospho-beta-D-ribosyl)imidazole-4-carboxamide + L-glutamine = D-erythro-1-(imidazol-4-yl)glycerol 3-phosphate + 5-amino-1-(5-phospho-beta-D-ribosyl)imidazole-4-carboxamide + L-glutamate + H(+). It catalyses the reaction L-glutamine + H2O = L-glutamate + NH4(+). It functions in the pathway amino-acid biosynthesis; L-histidine biosynthesis; L-histidine from 5-phospho-alpha-D-ribose 1-diphosphate: step 5/9. Functionally, IGPS catalyzes the conversion of PRFAR and glutamine to IGP, AICAR and glutamate. The HisH subunit catalyzes the hydrolysis of glutamine to glutamate and ammonia as part of the synthesis of IGP and AICAR. The resulting ammonia molecule is channeled to the active site of HisF. The sequence is that of Imidazole glycerol phosphate synthase subunit HisH from Yersinia pestis.